Reading from the N-terminus, the 211-residue chain is MTRVVLGSASSGRLSVLRNAGIEPLVVVSDVDEDAIIAAHPSAPPDQVVTALASAKAGEVVTRLSHSDAADAVVIGCDSMLLLDGKLCGKPGSVDAAHRQWQTMSGRSADLVTGHCVIRLHDGEIVGNVTESSGTTVHFGTPSPDDLSAYLATGEPLWVAGAFTLDGLGGWFIDRIEGDPSNVIGVSLPVLRALFERLEVSVADLWSANGR.

Asp78 functions as the Proton acceptor in the catalytic mechanism.

Belongs to the Maf family. The cofactor is a divalent metal cation.

The protein resides in the cytoplasm. It catalyses the reaction a ribonucleoside 5'-triphosphate + H2O = a ribonucleoside 5'-phosphate + diphosphate + H(+). The catalysed reaction is a 2'-deoxyribonucleoside 5'-triphosphate + H2O = a 2'-deoxyribonucleoside 5'-phosphate + diphosphate + H(+). Functionally, nucleoside triphosphate pyrophosphatase. May have a dual role in cell division arrest and in preventing the incorporation of modified nucleotides into cellular nucleic acids. This Mycolicibacterium smegmatis (strain ATCC 700084 / mc(2)155) (Mycobacterium smegmatis) protein is Nucleoside triphosphate pyrophosphatase.